The chain runs to 491 residues: Nicotinamide phosphoribosyltransferase (491 aa).

Methionine 1 is subject to N-acetylmethionine. At tyrosine 188 the chain carries Phosphotyrosine. Arginine 196 serves as a coordination point for diphosphate. Residue aspartate 219 coordinates beta-nicotinamide D-ribonucleotide. 2 residues coordinate diphosphate: histidine 247 and arginine 311. Residues 311-313, 353-354, glycine 384, and arginine 392 contribute to the beta-nicotinamide D-ribonucleotide site; these read RPD and GD. Residue serine 472 is modified to Phosphoserine.

The protein belongs to the NAPRTase family. As to quaternary structure, homodimer. Expressed in various tissues. At the highest level in liver and at the second highest in heart. The amount is higher in heart than in lung.

The protein resides in the nucleus. The protein localises to the cytoplasm. It is found in the secreted. The enzyme catalyses beta-nicotinamide D-ribonucleotide + diphosphate = 5-phospho-alpha-D-ribose 1-diphosphate + nicotinamide + H(+). Its pathway is cofactor biosynthesis; NAD(+) biosynthesis; nicotinamide D-ribonucleotide from 5-phospho-alpha-D-ribose 1-diphosphate and nicotinamide: step 1/1. In terms of biological role, catalyzes the condensation of nicotinamide with 5-phosphoribosyl-1-pyrophosphate to yield nicotinamide mononucleotide, an intermediate in the biosynthesis of NAD. It is the rate limiting component in the mammalian NAD biosynthesis pathway. The secreted form behaves both as a cytokine with immunomodulating properties and an adipokine with anti-diabetic properties, it has no enzymatic activity, partly because of lack of activation by ATP, which has a low level in extracellular space and plasma. Plays a role in the modulation of circadian clock function. NAMPT-dependent oscillatory production of NAD regulates oscillation of clock target gene expression by releasing the core clock component: CLOCK-BMAL1 heterodimer from NAD-dependent SIRT1-mediated suppression. The polypeptide is Nicotinamide phosphoribosyltransferase (Nampt) (Rattus norvegicus (Rat)).